A 419-amino-acid chain; its full sequence is E3 ubiquitin-protein ligase RNF130 (419 aa).

An N-terminal signal peptide occupies residues 1-27 (MSGAARAGPARLAALALLTCSLWPTRA). Residues 28-194 (DNASQEYYTA…MPPKNFSRGS (167 aa)) lie on the Extracellular side of the membrane. Asparagine 29, asparagine 40, asparagine 112, asparagine 135, asparagine 172, and asparagine 189 each carry an N-linked (GlcNAc...) asparagine glycan. Residues 105–176 (IALLQRGNCT…SYLEKNISVQ (72 aa)) enclose the PA domain. A helical transmembrane segment spans residues 195–217 (LVFVSISFIVLMIISSAWLIFYF). At 218-419 (IQKIRYTNAR…SLNANEVEWF (202 aa)) the chain is on the cytoplasmic side. The segment at 264 to 305 (CAVCIESYKQNDVVRVLPCKHVFHKSCVDPWLSEHCTCPMCK) adopts an RING-type zinc-finger fold. Phosphoserine is present on serine 341.

In terms of tissue distribution, in testis sections, expressed in interstitial tissue and seminiferous tubules. In tubules, expression is mainly in postmeiotic germ cells and to a much lesser extent in Sertoli cells (at protein level). Expressed at high levels in liver, lung, stomach, heart and thymus.

The protein resides in the membrane. It is found in the cytoplasm. It carries out the reaction S-ubiquitinyl-[E2 ubiquitin-conjugating enzyme]-L-cysteine + [acceptor protein]-L-lysine = [E2 ubiquitin-conjugating enzyme]-L-cysteine + N(6)-ubiquitinyl-[acceptor protein]-L-lysine.. It participates in protein modification; protein ubiquitination. Its function is as follows. Acts as an E3 ubiquitin-protein ligase. May have a role during the programmed cell death of hematopoietic cells. In Rattus norvegicus (Rat), this protein is E3 ubiquitin-protein ligase RNF130.